The sequence spans 170 residues: Cyclic pyranopterin monophosphate synthase (170 aa).

Residues 89–91 (LCH) and 125–126 (ME) contribute to the substrate site. Asp140 is a catalytic residue.

The protein belongs to the MoaC family. In terms of assembly, homohexamer; trimer of dimers.

The catalysed reaction is (8S)-3',8-cyclo-7,8-dihydroguanosine 5'-triphosphate = cyclic pyranopterin phosphate + diphosphate. Its pathway is cofactor biosynthesis; molybdopterin biosynthesis. Its function is as follows. Catalyzes the conversion of (8S)-3',8-cyclo-7,8-dihydroguanosine 5'-triphosphate to cyclic pyranopterin monophosphate (cPMP). This Streptomyces avermitilis (strain ATCC 31267 / DSM 46492 / JCM 5070 / NBRC 14893 / NCIMB 12804 / NRRL 8165 / MA-4680) protein is Cyclic pyranopterin monophosphate synthase.